The chain runs to 467 residues: Methionine aminopeptidase 2-1 (467 aa).

Positions 1 to 10 are enriched in basic and acidic residues; sequence MGSKSPDGHR. The interval 1–105 is disordered; the sequence is MGSKSPDGHR…TPPRVSLPSI (105 aa). Acidic residues predominate over residues 43-55; sequence DGDDEDEDGDDDG. The segment covering 75 to 90 has biased composition (basic residues); that stretch reads KKRKRKSNKKKKKKTS. Histidine 219 provides a ligand contact to substrate. A divalent metal cation-binding residues include aspartate 240, aspartate 251, and histidine 320. Histidine 328 lines the substrate pocket. A divalent metal cation-binding residues include glutamate 353 and glutamate 448.

The protein belongs to the peptidase M24A family. Methionine aminopeptidase eukaryotic type 2 subfamily. The cofactor is Co(2+). Requires Zn(2+) as cofactor. Mn(2+) is required as a cofactor. It depends on Fe(2+) as a cofactor.

Its subcellular location is the cytoplasm. It catalyses the reaction Release of N-terminal amino acids, preferentially methionine, from peptides and arylamides.. In terms of biological role, cotranslationally removes the N-terminal methionine from nascent proteins. The N-terminal methionine is often cleaved when the second residue in the primary sequence is small and uncharged (Met-Ala-, Cys, Gly, Pro, Ser, Thr, or Val). The protein is Methionine aminopeptidase 2-1 of Arthroderma gypseum (strain ATCC MYA-4604 / CBS 118893) (Microsporum gypseum).